A 99-amino-acid polypeptide reads, in one-letter code: Small ribosomal subunit protein uS17 (99 aa).

Belongs to the universal ribosomal protein uS17 family. In terms of assembly, part of the 30S ribosomal subunit.

In terms of biological role, one of the primary rRNA binding proteins, it binds specifically to the 5'-end of 16S ribosomal RNA. The sequence is that of Small ribosomal subunit protein uS17 from Thermosipho africanus (strain TCF52B).